A 344-amino-acid chain; its full sequence is Probable dual-specificity RNA methyltransferase RlmN (344 aa).

The Proton acceptor role is filled by Glu-89. Residues 95–329 (TDQRLTVCVS…VSLRASRGLD (235 aa)) enclose the Radical SAM core domain. A disulfide bridge connects residues Cys-102 and Cys-334. Cys-109, Cys-113, and Cys-116 together coordinate [4Fe-4S] cluster. S-adenosyl-L-methionine is bound by residues 156–157 (GE), Ser-186, 215–217 (SLH), and Asn-291. Catalysis depends on Cys-334, which acts as the S-methylcysteine intermediate.

Belongs to the radical SAM superfamily. RlmN family. [4Fe-4S] cluster serves as cofactor.

Its subcellular location is the cytoplasm. The catalysed reaction is adenosine(2503) in 23S rRNA + 2 reduced [2Fe-2S]-[ferredoxin] + 2 S-adenosyl-L-methionine = 2-methyladenosine(2503) in 23S rRNA + 5'-deoxyadenosine + L-methionine + 2 oxidized [2Fe-2S]-[ferredoxin] + S-adenosyl-L-homocysteine. The enzyme catalyses adenosine(37) in tRNA + 2 reduced [2Fe-2S]-[ferredoxin] + 2 S-adenosyl-L-methionine = 2-methyladenosine(37) in tRNA + 5'-deoxyadenosine + L-methionine + 2 oxidized [2Fe-2S]-[ferredoxin] + S-adenosyl-L-homocysteine. In terms of biological role, specifically methylates position 2 of adenine 2503 in 23S rRNA and position 2 of adenine 37 in tRNAs. This is Probable dual-specificity RNA methyltransferase RlmN from Parasynechococcus marenigrum (strain WH8102).